The following is a 354-amino-acid chain: Ferrochelatase (354 aa).

Histidine 204 and glutamate 306 together coordinate Fe cation.

This sequence belongs to the ferrochelatase family.

It is found in the cytoplasm. It catalyses the reaction heme b + 2 H(+) = protoporphyrin IX + Fe(2+). It functions in the pathway porphyrin-containing compound metabolism; protoheme biosynthesis; protoheme from protoporphyrin-IX: step 1/1. Functionally, catalyzes the ferrous insertion into protoporphyrin IX. This is Ferrochelatase from Coxiella burnetii (strain CbuK_Q154) (Coxiella burnetii (strain Q154)).